Reading from the N-terminus, the 159-residue chain is Troponin C, skeletal muscle (159 aa).

Position 1 is an N-acetylthreonine (Thr-1). EF-hand domains are found at residues 14–49, 50–85, 90–125, and 126–159; these read EMIA…LGQT, PTKE…QMKE, KSEE…SGEH, and VTDE…EGVQ. Residues Asp-27, Asp-29, Asp-33, Glu-38, Asp-63, Asp-65, Ser-67, Thr-69, Glu-74, Asp-103, Asn-105, Asp-107, Tyr-109, Glu-114, Asp-139, Asn-141, Asp-143, Arg-145, and Glu-150 each contribute to the Ca(2+) site.

Belongs to the troponin C family.

Its function is as follows. Troponin is the central regulatory protein of striated muscle contraction. Tn consists of three components: Tn-I which is the inhibitor of actomyosin ATPase, Tn-T which contains the binding site for tropomyosin and Tn-C. The binding of calcium to Tn-C abolishes the inhibitory action of Tn on actin filaments. This Sus scrofa (Pig) protein is Troponin C, skeletal muscle (TNNC2).